The following is a 358-amino-acid chain: MPGKKISVLLVDDSAVVRQVLVAILNETPDIHVMAAASDPIFAMGKLAHEWPDVIVLDVEMPRMDGITFLKKIMSERPTPVVICSSLTQKGAETSLQALSAGAVEIITKPTTGLKNFLIESAAELVAAIRAAANSNVKNLGKRTATPVLTPASKLTADAILPAASGHSMAQTTERIVAIGTSTGGTQALEAVLTALPRVCPGIVIVQHMPEKFTASFAERLNGLSQIEVREARNNDRILPGLALIAPGGKHMMVTRSGAYYHVQVIDGPLVNRHRPSVDVLFRSVARFAGKNATGIIMTGMGDDGARGLKEMLDAGSSTVAQDEASCVVFGMPKEAIKLNAAQRIMPLQEIHQAILHR.

A Response regulatory domain is found at 7 to 124 (SVLLVDDSAV…KNFLIESAAE (118 aa)). Position 58 is a 4-aspartylphosphate (Asp58). The CheB-type methylesterase domain maps to 170-358 (AQTTERIVAI…QEIHQAILHR (189 aa)). Residues Ser182, His208, and Asp304 contribute to the active site.

It belongs to the CheB family. Post-translationally, phosphorylated by CheA. Phosphorylation of the N-terminal regulatory domain activates the methylesterase activity.

The protein resides in the cytoplasm. The enzyme catalyses [protein]-L-glutamate 5-O-methyl ester + H2O = L-glutamyl-[protein] + methanol + H(+). It carries out the reaction L-glutaminyl-[protein] + H2O = L-glutamyl-[protein] + NH4(+). Its function is as follows. Involved in chemotaxis. Part of a chemotaxis signal transduction system that modulates chemotaxis in response to various stimuli. Catalyzes the demethylation of specific methylglutamate residues introduced into the chemoreceptors (methyl-accepting chemotaxis proteins or MCP) by CheR. Also mediates the irreversible deamidation of specific glutamine residues to glutamic acid. The sequence is that of Protein-glutamate methylesterase/protein-glutamine glutaminase 2 from Pseudomonas syringae pv. tomato (strain ATCC BAA-871 / DC3000).